We begin with the raw amino-acid sequence, 98 residues long: UPF0213 protein in ldhD 5'region (98 aa).

The GIY-YIG domain maps to 7-84 (NGFYFYVLWC…KKQSRKEKLK (78 aa)).

Belongs to the UPF0213 family.

This chain is UPF0213 protein in ldhD 5'region, found in Pediococcus acidilactici.